The following is a 216-amino-acid chain: Octanoyltransferase (216 aa).

Residues 24–212 (KFRKECILFL…NLCSFLEPIN (189 aa)) enclose the BPL/LPL catalytic domain. Substrate contacts are provided by residues 69–76 (RGGDFTAH), 140–142 (SIG), and 153–155 (GIA). The active-site Acyl-thioester intermediate is Cys171.

The protein belongs to the LipB family.

It localises to the cytoplasm. It catalyses the reaction octanoyl-[ACP] + L-lysyl-[protein] = N(6)-octanoyl-L-lysyl-[protein] + holo-[ACP] + H(+). It participates in protein modification; protein lipoylation via endogenous pathway; protein N(6)-(lipoyl)lysine from octanoyl-[acyl-carrier-protein]: step 1/2. In terms of biological role, catalyzes the transfer of endogenously produced octanoic acid from octanoyl-acyl-carrier-protein onto the lipoyl domains of lipoate-dependent enzymes. Lipoyl-ACP can also act as a substrate although octanoyl-ACP is likely to be the physiological substrate. The chain is Octanoyltransferase from Leptospira interrogans serogroup Icterohaemorrhagiae serovar copenhageni (strain Fiocruz L1-130).